We begin with the raw amino-acid sequence, 507 residues long: 25-hydroxyvitamin D-1 alpha hydroxylase, mitochondrial (507 aa).

Residue cysteine 454 participates in heme binding.

This sequence belongs to the cytochrome P450 family. Heme serves as cofactor. In terms of tissue distribution, kidney.

The protein resides in the mitochondrion membrane. It catalyses the reaction calcidiol + 2 reduced [adrenodoxin] + O2 + 2 H(+) = calcitriol + 2 oxidized [adrenodoxin] + H2O. It carries out the reaction secalciferol + 2 reduced [adrenodoxin] + O2 + 2 H(+) = calcitetrol + 2 oxidized [adrenodoxin] + H2O. The catalysed reaction is 25-hydroxy-24-oxocalciol + 2 reduced [adrenodoxin] + O2 + 2 H(+) = (1S)-1,25-dihydroxy-24-oxocalciol + 2 oxidized [adrenodoxin] + H2O. The enzyme catalyses 25-hydroxyvitamin D2 + 2 reduced [adrenodoxin] + O2 + 2 H(+) = 1alpha,25-dihydroxyvitamin D2 + 2 oxidized [adrenodoxin] + H2O. It functions in the pathway hormone biosynthesis; vitamin D biosynthesis. Activated by cardiolipin and dioleoyl phosphatidylethanolamine (DOPE), phospholipids found in the inner mitochondrial membrane. Inhibited by high substrate concentration. Its function is as follows. A cytochrome P450 monooxygenase involved in vitamin D metabolism and in calcium and phosphorus homeostasis. Catalyzes the rate-limiting step in the activation of vitamin D in the kidney, namely the hydroxylation of 25-hydroxyvitamin D3/calcidiol at the C1-alpha position to form the hormonally active form of vitamin D3, 1alpha,25-dihydroxyvitamin D3/calcitriol that acts via the vitamin D receptor (VDR). Has 1-alpha-hydroxylase activity on vitamin D intermediates of the CYP24A1-mediated inactivation pathway. Converts 24R,25-dihydroxyvitamin D3/secalciferol to 1-alpha,24,25-trihydroxyvitamin D3, an active ligand of VDR. Also active on 25-hydroxyvitamin D2. Mechanistically, uses molecular oxygen inserting one oxygen atom into a substrate, and reducing the second into a water molecule, with two electrons provided by NADPH via FDXR/adrenodoxin reductase and FDX1/adrenodoxin. The polypeptide is 25-hydroxyvitamin D-1 alpha hydroxylase, mitochondrial (Cyp27b1) (Mus musculus (Mouse)).